Consider the following 229-residue polypeptide: Small ribosomal subunit protein mS23 (229 aa).

The protein belongs to the mitochondrion-specific ribosomal protein mS23 family. Component of the mitochondrial small ribosomal subunit.

The protein localises to the mitochondrion. This is Small ribosomal subunit protein mS23 (RSM25) from Yarrowia lipolytica (strain CLIB 122 / E 150) (Yeast).